The chain runs to 331 residues: Probable allantoicase (331 aa).

The protein belongs to the allantoicase family.

It carries out the reaction allantoate + H2O = (S)-ureidoglycolate + urea. Its pathway is nitrogen metabolism; (S)-allantoin degradation; (S)-ureidoglycolate from allantoate (aminidohydrolase route): step 1/1. The sequence is that of Probable allantoicase from Pseudomonas savastanoi pv. phaseolicola (strain 1448A / Race 6) (Pseudomonas syringae pv. phaseolicola (strain 1448A / Race 6)).